A 259-amino-acid chain; its full sequence is MLRKKLLKILSVLTLFIFFQYVAKFGILESLALSIVYVLLMEILRDLEILAEKRVTYKLSSTEVTKYVVSEASIFVTSLAITFLLGGEILDGLAFGFFFLVYLQWFYNEAEMERVFNDFPTFPKIFLIYRFAITLFGSTICFYRFVFGDVLKSIVAGILTFALFLSQRALNLEYVTSGKFVRSVSNPQWYFRRVKHFILSAPAMGVGATAGYIAARSAEIESIIETVCWTFRAFLLLTIVVVCILTLGSWLGLKVHKKA.

Transmembrane regions (helical) follow at residues 9–31 (ILSV…LESL), 84–106 (LLGG…LQWF), 126–148 (FLIY…FVFG), 153–175 (SIVA…LEYV), 196–215 (HFIL…YIAA), and 230–252 (TFRA…SWLG).

It is found in the cell membrane. This is an uncharacterized protein from Archaeoglobus fulgidus (strain ATCC 49558 / DSM 4304 / JCM 9628 / NBRC 100126 / VC-16).